A 300-amino-acid polypeptide reads, in one-letter code: MSYRELVAELPREHAEALSDALVELGALSVSVEDADADTPDEQPLFGEPGLVPERTAWQHSRVIALVDATQDPAVLLAAAANEAGLARTPRFELREVEEQDWVRLTQSQFEPIHIGEKIWVVPSWHDAPQPDALVLELDPGLAFGTGSHPTTRLCMEWLEQTVQPGQTVLDYGCGSGILAILAKKCGAGRVTGIDIDPQAVEAARHNSERNRADVTYGLPDDCPDGEFDIVVANILSNPLKLMASMLASKVKPGGRIALSGVLARQADEVASVYARYIDIAVWREHEGWVCLAGTRRESH.

Residues threonine 152, glycine 173, aspartate 195, and asparagine 234 each coordinate S-adenosyl-L-methionine.

It belongs to the methyltransferase superfamily. PrmA family.

It localises to the cytoplasm. It carries out the reaction L-lysyl-[protein] + 3 S-adenosyl-L-methionine = N(6),N(6),N(6)-trimethyl-L-lysyl-[protein] + 3 S-adenosyl-L-homocysteine + 3 H(+). Functionally, methylates ribosomal protein L11. This chain is Ribosomal protein L11 methyltransferase, found in Burkholderia pseudomallei (strain K96243).